Consider the following 427-residue polypeptide: Serine--tRNA ligase (427 aa).

Position 231 to 233 (231 to 233 (TAE)) interacts with L-serine. 262 to 264 (RSE) lines the ATP pocket. Glutamate 285 contributes to the L-serine binding site. 349–352 (EISS) is a binding site for ATP. Serine 385 provides a ligand contact to L-serine.

The protein belongs to the class-II aminoacyl-tRNA synthetase family. Type-1 seryl-tRNA synthetase subfamily. Homodimer. The tRNA molecule binds across the dimer.

The protein localises to the cytoplasm. It carries out the reaction tRNA(Ser) + L-serine + ATP = L-seryl-tRNA(Ser) + AMP + diphosphate + H(+). The catalysed reaction is tRNA(Sec) + L-serine + ATP = L-seryl-tRNA(Sec) + AMP + diphosphate + H(+). Its pathway is aminoacyl-tRNA biosynthesis; selenocysteinyl-tRNA(Sec) biosynthesis; L-seryl-tRNA(Sec) from L-serine and tRNA(Sec): step 1/1. In terms of biological role, catalyzes the attachment of serine to tRNA(Ser). Is also able to aminoacylate tRNA(Sec) with serine, to form the misacylated tRNA L-seryl-tRNA(Sec), which will be further converted into selenocysteinyl-tRNA(Sec). The chain is Serine--tRNA ligase from Rhizobium etli (strain CIAT 652).